The primary structure comprises 557 residues: Urocanate hydratase (557 aa).

Residues 52–53, Q130, 176–178, E196, 242–243, 263–267, 273–274, and Y322 each bind NAD(+); these read GG, GMG, NA, QTSAH, and YL. C410 is a catalytic residue. G492 provides a ligand contact to NAD(+).

This sequence belongs to the urocanase family. It depends on NAD(+) as a cofactor.

The protein resides in the cytoplasm. It carries out the reaction 4-imidazolone-5-propanoate = trans-urocanate + H2O. Its pathway is amino-acid degradation; L-histidine degradation into L-glutamate; N-formimidoyl-L-glutamate from L-histidine: step 2/3. Catalyzes the conversion of urocanate to 4-imidazolone-5-propionate. The protein is Urocanate hydratase of Rhizobium meliloti (strain 1021) (Ensifer meliloti).